The chain runs to 216 residues: Cytidylate kinase (216 aa).

ATP is bound at residue 7 to 15; that stretch reads GPAGTGKST.

It belongs to the cytidylate kinase family. Type 1 subfamily.

It localises to the cytoplasm. It carries out the reaction CMP + ATP = CDP + ADP. It catalyses the reaction dCMP + ATP = dCDP + ADP. This Chlamydia muridarum (strain MoPn / Nigg) protein is Cytidylate kinase.